We begin with the raw amino-acid sequence, 122 residues long: Large ribosomal subunit protein uL14c (122 aa).

The protein belongs to the universal ribosomal protein uL14 family. In terms of assembly, part of the 50S ribosomal subunit.

The protein localises to the plastid. Its subcellular location is the chloroplast. Its function is as follows. Binds to 23S rRNA. The chain is Large ribosomal subunit protein uL14c from Drimys granadensis.